Reading from the N-terminus, the 786-residue chain is Ciliated left-right organizer ZP-N domains-containing protein (786 aa).

Residues 1-18 (MWGSVAVVWAICLACIQP) form the signal peptide.

As to expression, expressed specifically by cells of the ciliated left-right organizer.

Functionally, plays a role in left-right patterning process. The chain is Ciliated left-right organizer ZP-N domains-containing protein (Ciroz) from Mus musculus (Mouse).